The sequence spans 636 residues: Threonine--tRNA ligase (636 aa).

Residues 1 to 59 (MPIITLPDGTKKIFEQVVSVEQVAKSMGLVKAALAGEVDGELVSTSFLIKTDANLTIIT) enclose the TGS domain. Residues 240–531 (DHRKIGKTQD…LIEHYEGAYP (292 aa)) are catalytic. Zn(2+) is bound by residues Cys331, His382, and His508.

Belongs to the class-II aminoacyl-tRNA synthetase family. Homodimer. Zn(2+) is required as a cofactor.

It localises to the cytoplasm. The enzyme catalyses tRNA(Thr) + L-threonine + ATP = L-threonyl-tRNA(Thr) + AMP + diphosphate + H(+). Catalyzes the attachment of threonine to tRNA(Thr) in a two-step reaction: L-threonine is first activated by ATP to form Thr-AMP and then transferred to the acceptor end of tRNA(Thr). Also edits incorrectly charged L-seryl-tRNA(Thr). This is Threonine--tRNA ligase from Vesicomyosocius okutanii subsp. Calyptogena okutanii (strain HA).